Reading from the N-terminus, the 394-residue chain is Elongation factor Tu (394 aa).

The tr-type G domain maps to 10–204; it reads KPHVNVGTIG…YLDSYIPEPE (195 aa). The segment at 19-26 is G1; it reads GHVDHGKT. 19–26 is a GTP binding site; that stretch reads GHVDHGKT. Residue threonine 26 participates in Mg(2+) binding. Residues 60–64 are G2; sequence GITIN. The tract at residues 81–84 is G3; it reads DCPG. Residues 81-85 and 136-139 contribute to the GTP site; these read DCPGH and NKCD. The tract at residues 136 to 139 is G4; that stretch reads NKCD. Residues 174 to 176 are G5; it reads SAL.

It belongs to the TRAFAC class translation factor GTPase superfamily. Classic translation factor GTPase family. EF-Tu/EF-1A subfamily. In terms of assembly, monomer.

Its subcellular location is the cytoplasm. The catalysed reaction is GTP + H2O = GDP + phosphate + H(+). GTP hydrolase that promotes the GTP-dependent binding of aminoacyl-tRNA to the A-site of ribosomes during protein biosynthesis. This is Elongation factor Tu from Pectobacterium atrosepticum (strain SCRI 1043 / ATCC BAA-672) (Erwinia carotovora subsp. atroseptica).